Consider the following 338-residue polypeptide: Ornithine carbamoyltransferase, catabolic (338 aa).

Carbamoyl phosphate contacts are provided by residues 58 to 61, Gln-85, Arg-109, and 136 to 139; these read STRT and HPTQ. Residues Asn-168, Asp-232, and 236–237 each bind L-ornithine; that span reads SM. Carbamoyl phosphate is bound by residues 273 to 274 and Arg-318; that span reads CL.

It belongs to the aspartate/ornithine carbamoyltransferase superfamily. OTCase family.

The protein localises to the cytoplasm. It catalyses the reaction carbamoyl phosphate + L-ornithine = L-citrulline + phosphate + H(+). Its pathway is amino-acid degradation; L-arginine degradation via ADI pathway; carbamoyl phosphate from L-arginine: step 2/2. Its function is as follows. Reversibly catalyzes the transfer of the carbamoyl group from carbamoyl phosphate (CP) to the N(epsilon) atom of ornithine (ORN) to produce L-citrulline. The polypeptide is Ornithine carbamoyltransferase, catabolic (Streptococcus gordonii (strain Challis / ATCC 35105 / BCRC 15272 / CH1 / DL1 / V288)).